Consider the following 99-residue polypeptide: Aspartyl/glutamyl-tRNA(Asn/Gln) amidotransferase subunit C (99 aa).

The protein belongs to the GatC family. As to quaternary structure, heterotrimer of A, B and C subunits.

The catalysed reaction is L-glutamyl-tRNA(Gln) + L-glutamine + ATP + H2O = L-glutaminyl-tRNA(Gln) + L-glutamate + ADP + phosphate + H(+). It carries out the reaction L-aspartyl-tRNA(Asn) + L-glutamine + ATP + H2O = L-asparaginyl-tRNA(Asn) + L-glutamate + ADP + phosphate + 2 H(+). Its function is as follows. Allows the formation of correctly charged Asn-tRNA(Asn) or Gln-tRNA(Gln) through the transamidation of misacylated Asp-tRNA(Asn) or Glu-tRNA(Gln) in organisms which lack either or both of asparaginyl-tRNA or glutaminyl-tRNA synthetases. The reaction takes place in the presence of glutamine and ATP through an activated phospho-Asp-tRNA(Asn) or phospho-Glu-tRNA(Gln). This is Aspartyl/glutamyl-tRNA(Asn/Gln) amidotransferase subunit C from Ralstonia pickettii (strain 12J).